Reading from the N-terminus, the 959-residue chain is ATP-dependent 6-phosphofructokinase subunit beta (959 aa).

The tract at residues 2 to 573 (TVTTPFVNGT…HLNNFMAINS (572 aa)) is N-terminal catalytic PFK domain 1. A disordered region spans residues 144-167 (KNAVSTKPTPPPAPEASAESGLSS). Position 152 is a phosphothreonine (threonine 152). Residues 158–167 (EASAESGLSS) are compositionally biased toward low complexity. Residues serine 163 and serine 171 each carry the phosphoserine modification. ATP contacts are provided by residues glycine 206, 270-271 (RC), and 300-303 (GDGS). Aspartate 301 lines the Mg(2+) pocket. Beta-D-fructose 6-phosphate-binding positions include 346–348 (SID), arginine 383, 390–392 (MGR), glutamate 447, arginine 475, and 481–484 (HVQR). The active-site Proton acceptor is the aspartate 348. An interdomain linker region spans residues 574–587 (ADHNEPKLPKDKRL). The C-terminal regulatory PFK domain 2 stretch occupies residues 588 to 959 (KIAIVNVGAP…DHLVGRKRVD (372 aa)). Beta-D-fructose 2,6-bisphosphate-binding positions include arginine 658, 716–720 (TLSNN), arginine 754, and 761–763 (QGG). Residue serine 803 is modified to Phosphoserine. Beta-D-fructose 2,6-bisphosphate-binding positions include lysine 847, 853 to 856 (HVQQ), and arginine 935.

It belongs to the phosphofructokinase type A (PFKA) family. ATP-dependent PFK group I subfamily. Eukaryotic two domain clade 'E' sub-subfamily. In terms of assembly, heterooctamer of 4 alpha and 4 beta chains. Mg(2+) serves as cofactor.

It is found in the cytoplasm. The protein localises to the mitochondrion outer membrane. It catalyses the reaction beta-D-fructose 6-phosphate + ATP = beta-D-fructose 1,6-bisphosphate + ADP + H(+). It participates in carbohydrate degradation; glycolysis; D-glyceraldehyde 3-phosphate and glycerone phosphate from D-glucose: step 3/4. With respect to regulation, allosterically activated by ADP, AMP, or fructose 2,6-bisphosphate, and allosterically inhibited by ATP or citrate. Functionally, catalyzes the phosphorylation of D-fructose 6-phosphate to fructose 1,6-bisphosphate by ATP, the first committing step of glycolysis. The sequence is that of ATP-dependent 6-phosphofructokinase subunit beta (PFK2) from Saccharomyces cerevisiae (strain ATCC 204508 / S288c) (Baker's yeast).